The chain runs to 155 residues: MSRKGSTPQRNVLPDPKYGSETIARFINMVMKSGKKSVAEKIVYGAMNVIGEKNSNAIELLQKALDNVSPAVEVKSRRVGGATYQVPVEVRASRRMALAMRWLIDSSRKRGENSMPRKLAAELLDASESRGGAIKKRDETHRMAEANKAFAHYRW.

Belongs to the universal ribosomal protein uS7 family. As to quaternary structure, part of the 30S ribosomal subunit. Contacts proteins S9 and S11.

In terms of biological role, one of the primary rRNA binding proteins, it binds directly to 16S rRNA where it nucleates assembly of the head domain of the 30S subunit. Is located at the subunit interface close to the decoding center, probably blocks exit of the E-site tRNA. The protein is Small ribosomal subunit protein uS7 of Xylella fastidiosa (strain M23).